Reading from the N-terminus, the 239-residue chain is 4-hydroxy-tetrahydrodipicolinate reductase (239 aa).

Residues 9–14 (GINGKI), 78–80 (GTT), and 104–107 (APNF) contribute to the NAD(+) site. The active-site Proton donor/acceptor is the histidine 134. Histidine 135 is a (S)-2,3,4,5-tetrahydrodipicolinate binding site. Lysine 138 serves as the catalytic Proton donor. Position 144–145 (144–145 (GT)) interacts with (S)-2,3,4,5-tetrahydrodipicolinate.

It belongs to the DapB family.

It is found in the cytoplasm. The enzyme catalyses (S)-2,3,4,5-tetrahydrodipicolinate + NAD(+) + H2O = (2S,4S)-4-hydroxy-2,3,4,5-tetrahydrodipicolinate + NADH + H(+). The catalysed reaction is (S)-2,3,4,5-tetrahydrodipicolinate + NADP(+) + H2O = (2S,4S)-4-hydroxy-2,3,4,5-tetrahydrodipicolinate + NADPH + H(+). The protein operates within amino-acid biosynthesis; L-lysine biosynthesis via DAP pathway; (S)-tetrahydrodipicolinate from L-aspartate: step 4/4. Its function is as follows. Catalyzes the conversion of 4-hydroxy-tetrahydrodipicolinate (HTPA) to tetrahydrodipicolinate. This chain is 4-hydroxy-tetrahydrodipicolinate reductase, found in Coxiella burnetii (strain CbuG_Q212) (Coxiella burnetii (strain Q212)).